A 434-amino-acid polypeptide reads, in one-letter code: 3-isopropylmalate dehydratase large subunit 1 (434 aa).

Positions 308, 368, and 371 each coordinate [4Fe-4S] cluster.

Belongs to the aconitase/IPM isomerase family. LeuC type 2 subfamily. In terms of assembly, heterodimer of LeuC and LeuD. [4Fe-4S] cluster serves as cofactor.

The catalysed reaction is (2R,3S)-3-isopropylmalate = (2S)-2-isopropylmalate. Its pathway is amino-acid biosynthesis; L-leucine biosynthesis; L-leucine from 3-methyl-2-oxobutanoate: step 2/4. Functionally, catalyzes the isomerization between 2-isopropylmalate and 3-isopropylmalate, via the formation of 2-isopropylmaleate. The protein is 3-isopropylmalate dehydratase large subunit 1 of Deinococcus radiodurans (strain ATCC 13939 / DSM 20539 / JCM 16871 / CCUG 27074 / LMG 4051 / NBRC 15346 / NCIMB 9279 / VKM B-1422 / R1).